The primary structure comprises 764 residues: FAST kinase domain-containing protein 5, mitochondrial (764 aa).

The transit peptide at methionine 1–serine 27 directs the protein to the mitochondrion. Positions isoleucine 68–glycine 94 are disordered. A compositionally biased stretch (polar residues) spans serine 81–leucine 93. Serine 95 carries the post-translational modification Phosphoserine. An N6-acetyllysine modification is found at lysine 507. The 61-residue stretch at leucine 697–glutamate 757 folds into the RAP domain.

This sequence belongs to the FAST kinase family. In terms of assembly, found in a complex with GRSF1, DDX28, DHX30 and FASTKD2. Associates with the 12S mitochondrial rRNA (12S mt-rRNA).

It is found in the mitochondrion matrix. Its subcellular location is the mitochondrion nucleoid. Plays an important role in the processing of non-canonical mitochondrial mRNA precursors. The polypeptide is FAST kinase domain-containing protein 5, mitochondrial (FASTKD5) (Pongo abelii (Sumatran orangutan)).